A 261-amino-acid polypeptide reads, in one-letter code: 3-methyl-2-oxobutanoate hydroxymethyltransferase (261 aa).

The Mg(2+) site is built by D42 and D81. 3-methyl-2-oxobutanoate is bound by residues 42 to 43 (DS), D81, and K110. E112 lines the Mg(2+) pocket. E179 (proton acceptor) is an active-site residue.

Belongs to the PanB family. As to quaternary structure, homodecamer; pentamer of dimers. Requires Mg(2+) as cofactor.

Its subcellular location is the cytoplasm. It carries out the reaction 3-methyl-2-oxobutanoate + (6R)-5,10-methylene-5,6,7,8-tetrahydrofolate + H2O = 2-dehydropantoate + (6S)-5,6,7,8-tetrahydrofolate. It functions in the pathway cofactor biosynthesis; coenzyme A biosynthesis. Its function is as follows. Catalyzes the reversible reaction in which hydroxymethyl group from 5,10-methylenetetrahydrofolate is transferred onto alpha-ketoisovalerate to form ketopantoate. This Pyrobaculum islandicum (strain DSM 4184 / JCM 9189 / GEO3) protein is 3-methyl-2-oxobutanoate hydroxymethyltransferase.